Here is an 801-residue protein sequence, read N- to C-terminus: Phosphatidylinositol 3-kinase pik3 (801 aa).

Residues 14-166 (VTARFLVKFC…RLDGLLLKLQ (153 aa)) form the C2 PI3K-type domain. In terms of domain architecture, PIK helical spans 257–439 (DKDLKPNSKI…SSVMFLFQKE (183 aa)). One can recognise a PI3K/PI4K catalytic domain in the interval 515–785 (IPDACTVFKS…LINDSVSALF (271 aa)). A G-loop region spans residues 521–527 (VFKSTMQ). Residues 654–662 (GVGDRHLDN) are catalytic loop. Positions 673 to 694 (HADFGYILGRDPKLFSPAMKLS) are activation loop.

This sequence belongs to the PI3/PI4-kinase family. Component of the autophagy-specific vps34 PI3-kinase complex I composed of vps15, atg6, pik3/vps34, atg14 and atg38. Also a component of the VPS34 PI3-kinase complex II composed of atg6, pik3, vps15 and vps38.

The enzyme catalyses a 1,2-diacyl-sn-glycero-3-phospho-(1D-myo-inositol) + ATP = a 1,2-diacyl-sn-glycero-3-phospho-(1D-myo-inositol-3-phosphate) + ADP + H(+). Phosphatidylinositol 3-kinase that functions as a part of the autophagy-specific VPS34 PI3-kinase complex I that plays a role in autophagosome assembly. This complex is essential to recruit the atg8-phosphatidylinositol conjugate and the atg12-atg5 conjugate to the pre-autophagosomal structure. Also functions as part of the VPS34 PI3-kinase complex II. This chain is Phosphatidylinositol 3-kinase pik3 (pik3), found in Schizosaccharomyces pombe (strain 972 / ATCC 24843) (Fission yeast).